The sequence spans 498 residues: Putative phosphotransferase 057R (498 aa).

In Dryophytes versicolor (chameleon treefrog), this protein is Putative phosphotransferase 057R.